The following is a 350-amino-acid chain: 4-hydroxy-2-oxovalerate aldolase 2 (350 aa).

A Pyruvate carboxyltransferase domain is found at isoleucine 8–glutamine 260. Arginine 16–aspartate 17 is a binding site for substrate. Aspartate 17 contributes to the Mn(2+) binding site. The active-site Proton acceptor is the histidine 20. Positions 170 and 199 each coordinate substrate. 2 residues coordinate Mn(2+): histidine 199 and histidine 201. Tyrosine 290 contributes to the substrate binding site.

Belongs to the 4-hydroxy-2-oxovalerate aldolase family.

It carries out the reaction (S)-4-hydroxy-2-oxopentanoate = acetaldehyde + pyruvate. This chain is 4-hydroxy-2-oxovalerate aldolase 2 (tesG), found in Comamonas testosteroni (Pseudomonas testosteroni).